Reading from the N-terminus, the 362-residue chain is Glutaminase-asparaginase (362 aa).

The signal sequence occupies residues 1–25; that stretch reads MNAALKTFAPSALALLLILPSSASA. The Asparaginase/glutaminase domain occupies 35 to 362; that stretch reads ANVVILATGG…KELQRIFWEY (328 aa). Thr-45 serves as the catalytic Acyl-ester intermediate. Substrate is bound by residues Ser-92 and 125-126; that span reads TD.

The protein belongs to the asparaginase 1 family. In terms of assembly, homotetramer.

It localises to the periplasm. It carries out the reaction L-glutamine + H2O = L-glutamate + NH4(+). The enzyme catalyses L-asparagine + H2O = L-aspartate + NH4(+). The chain is Glutaminase-asparaginase (ansB) from Pseudomonas putida (strain ATCC 47054 / DSM 6125 / CFBP 8728 / NCIMB 11950 / KT2440).